Here is a 494-residue protein sequence, read N- to C-terminus: ATP synthase subunit alpha 1 (494 aa).

Belongs to the ATPase alpha/beta chains family. F-type ATPases have 2 components, CF(1) - the catalytic core - and CF(0) - the membrane proton channel. CF(1) has five subunits: alpha(3), beta(3), gamma(1), delta(1), epsilon(1). CF(0) has three main subunits: a(1), b(2) and c(9-12). The alpha and beta chains form an alternating ring which encloses part of the gamma chain. CF(1) is attached to CF(0) by a central stalk formed by the gamma and epsilon chains, while a peripheral stalk is formed by the delta and b chains.

The protein localises to the cell inner membrane. The catalysed reaction is ATP + H2O + 4 H(+)(in) = ADP + phosphate + 5 H(+)(out). Produces ATP from ADP in the presence of a proton gradient across the membrane. The alpha chain is a regulatory subunit. The protein is ATP synthase subunit alpha 1 of Hahella chejuensis (strain KCTC 2396).